We begin with the raw amino-acid sequence, 552 residues long: Hydroxylamine reductase (552 aa).

[2Fe-2S] cluster contacts are provided by cysteine 3, cysteine 6, cysteine 18, and cysteine 25. The hybrid [4Fe-2O-2S] cluster site is built by histidine 250, glutamate 274, cysteine 318, cysteine 406, cysteine 434, cysteine 459, glutamate 493, and lysine 495. Position 406 is a cysteine persulfide (cysteine 406).

This sequence belongs to the HCP family. Requires [2Fe-2S] cluster as cofactor. Hybrid [4Fe-2O-2S] cluster serves as cofactor.

It is found in the cytoplasm. The catalysed reaction is A + NH4(+) + H2O = hydroxylamine + AH2 + H(+). Functionally, catalyzes the reduction of hydroxylamine to form NH(3) and H(2)O. This Shewanella sediminis (strain HAW-EB3) protein is Hydroxylamine reductase.